The following is a 659-amino-acid chain: Cysteine-rich receptor-like protein kinase 7 (659 aa).

Positions 1-23 (MSSLFPFIFLFLFSFLTSFRASA) are cleaved as a signal peptide. At 24–273 (QDPRFLAYYC…SLSDKSGNSN (250 aa)) the chain is on the extracellular side. 2 consecutive Gnk2-homologous domains span residues 27 to 131 (RFLA…HKNI) and 142 to 244 (FILR…LYDF). N35, N42, N60, N69, and N103 each carry an N-linked (GlcNAc...) asparagine glycan. An N-linked (GlcNAc...) asparagine glycan is attached at N246. A helical membrane pass occupies residues 274 to 294 (VVVVAVVVPIIVAVLIFIAGY). The Cytoplasmic segment spans residues 295-659 (CFFAKRAKKT…DKSMSDLDPR (365 aa)). One can recognise a Protein kinase domain in the interval 336 to 622 (FSENNKIGRG…ALPAPQQPGF (287 aa)). ATP is bound by residues 342-350 (IGRGGFGDV) and K364. At Y409 the chain carries Phosphotyrosine. D461 (proton acceptor) is an active-site residue. The residue at position 465 (S465) is a Phosphoserine. A Phosphothreonine modification is found at T501. At Y509 the chain carries Phosphotyrosine. Positions 626–659 (SRPGTNRLDSDQSTTNKSVTVSIDDKSMSDLDPR) are disordered. Over residues 636-646 (DQSTTNKSVTV) the composition is skewed to polar residues. Residues 648-659 (IDDKSMSDLDPR) are compositionally biased toward basic and acidic residues.

The protein belongs to the protein kinase superfamily. Ser/Thr protein kinase family. CRK subfamily.

It localises to the membrane. It catalyses the reaction L-seryl-[protein] + ATP = O-phospho-L-seryl-[protein] + ADP + H(+). The catalysed reaction is L-threonyl-[protein] + ATP = O-phospho-L-threonyl-[protein] + ADP + H(+). The chain is Cysteine-rich receptor-like protein kinase 7 (CRK7) from Arabidopsis thaliana (Mouse-ear cress).